The chain runs to 398 residues: Phosphoglycerate kinase (398 aa).

Residues 23 to 25 (DLN), R38, 61 to 64 (HFGR), R120, and R153 each bind substrate. ATP is bound by residues K203, E325, and 355-358 (GGDT).

This sequence belongs to the phosphoglycerate kinase family. As to quaternary structure, monomer.

Its subcellular location is the cytoplasm. The catalysed reaction is (2R)-3-phosphoglycerate + ATP = (2R)-3-phospho-glyceroyl phosphate + ADP. It functions in the pathway carbohydrate degradation; glycolysis; pyruvate from D-glyceraldehyde 3-phosphate: step 2/5. The chain is Phosphoglycerate kinase from Sphingopyxis alaskensis (strain DSM 13593 / LMG 18877 / RB2256) (Sphingomonas alaskensis).